The sequence spans 159 residues: Transmembrane protein 42 (159 aa).

Transmembrane regions (helical) follow at residues 37–57 (FWGVFNCLCAGAFGALAAASA), 68–88 (GFCVLGIIMMATTNSLMWTFF), 100–120 (IASVTVTFSNILNSAFLGFVL), and 124–144 (CQEVLWWGGVFLILCGLTLIH).

It localises to the membrane. The sequence is that of Transmembrane protein 42 (TMEM42) from Bos taurus (Bovine).